Consider the following 194-residue polypeptide: MLEDEILSEFRASQALLEGHFLLSSGRHSAHYLQCARVLMDPMRASRLAAATAAKIPRDLRHQIQKVVSPAMGGVIIGHEMGRALGVEAMFVERPTGTFELRRGFALNPGEKVLMVEDVVTTGLSSREAIKAIEQAGGEVIAAAALVDRSAGAVDLGVPFFPLVALNFPTYAPDELPPELAATEAVKPGSRAKP.

117-125 lines the 5-phospho-alpha-D-ribose 1-diphosphate pocket; sequence EDVVTTGLS. Thr-121 and Arg-149 together coordinate orotate.

Belongs to the purine/pyrimidine phosphoribosyltransferase family. PyrE subfamily. Homodimer. Requires Mg(2+) as cofactor.

It catalyses the reaction orotidine 5'-phosphate + diphosphate = orotate + 5-phospho-alpha-D-ribose 1-diphosphate. Its pathway is pyrimidine metabolism; UMP biosynthesis via de novo pathway; UMP from orotate: step 1/2. Its function is as follows. Catalyzes the transfer of a ribosyl phosphate group from 5-phosphoribose 1-diphosphate to orotate, leading to the formation of orotidine monophosphate (OMP). The chain is Orotate phosphoribosyltransferase from Novosphingobium aromaticivorans (strain ATCC 700278 / DSM 12444 / CCUG 56034 / CIP 105152 / NBRC 16084 / F199).